We begin with the raw amino-acid sequence, 331 residues long: MEFHCKELDFSLKKVESDEKVKRKPGRPRKHNVRPVVKDVPIGNDFDKATITTKTFTIKVENFDPDIDIWRNQISVSNVQHNDLECRCKDKIFPYTKPHKPGDIVEEYVFSKKNTKNIEKKENVFKNCFTVVILDQSLKPTTIKICKKGSFQLTGCLSMESGEFCVLSLITNLQKKNPQWIPSLIDMTIKPVMTNVKFTIGYKISIVKALNFFENRKDIHEFFSYKLRVNPAINIKELLTEKDLENVPVRIVTYVNVNNKIYNRTSQEITLLNHIQTLSLKEKQKHFKEKHTTLLLFRSGSVILSGIHENVMKKTFESFQKVTSDYKSYLT.

Belongs to the IIV-6 335L family.

This is an uncharacterized protein from Invertebrate iridescent virus 6 (IIV-6).